Reading from the N-terminus, the 217-residue chain is Probable septum site-determining protein MinC (217 aa).

This sequence belongs to the MinC family. Interacts with MinD and FtsZ.

Its function is as follows. Cell division inhibitor that blocks the formation of polar Z ring septums. Rapidly oscillates between the poles of the cell to destabilize FtsZ filaments that have formed before they mature into polar Z rings. Prevents FtsZ polymerization. This Pelotomaculum thermopropionicum (strain DSM 13744 / JCM 10971 / SI) protein is Probable septum site-determining protein MinC.